Reading from the N-terminus, the 192-residue chain is Ion-translocating oxidoreductase complex subunit A (192 aa).

The next 6 membrane-spanning stretches (helical) occupy residues 5–25, 39–59, 65–85, 102–122, 134–154, and 171–191; these read LLLL…FLGL, IGMS…SYLV, LPFD…AVVV, ALGI…VALL, AIFG…FSAM, and AIAM…TGLV.

Belongs to the NqrDE/RnfAE family. In terms of assembly, the complex is composed of six subunits: RnfA, RnfB, RnfC, RnfD, RnfE and RnfG.

The protein resides in the cell inner membrane. Its function is as follows. Part of a membrane-bound complex that couples electron transfer with translocation of ions across the membrane. In Shewanella piezotolerans (strain WP3 / JCM 13877), this protein is Ion-translocating oxidoreductase complex subunit A.